The chain runs to 397 residues: Carbamoyl phosphate synthase small chain (397 aa).

A CPSase region spans residues 1 to 204 (MKHVLRKEKT…NAKLKEKIWH (204 aa)). 3 residues coordinate L-glutamine: S57, G252, and G254. In terms of domain architecture, Glutamine amidotransferase type-1 spans 204–391 (HVVVYDFGVK…IKLMKKSYNS (188 aa)). C280 (nucleophile) is an active-site residue. 4 residues coordinate L-glutamine: L281, Q284, N322, and Y325. Catalysis depends on residues H364 and E366.

It belongs to the CarA family. As to quaternary structure, composed of two chains; the small (or glutamine) chain promotes the hydrolysis of glutamine to ammonia, which is used by the large (or ammonia) chain to synthesize carbamoyl phosphate. Tetramer of heterodimers (alpha,beta)4.

The catalysed reaction is hydrogencarbonate + L-glutamine + 2 ATP + H2O = carbamoyl phosphate + L-glutamate + 2 ADP + phosphate + 2 H(+). It catalyses the reaction L-glutamine + H2O = L-glutamate + NH4(+). It participates in amino-acid biosynthesis; L-arginine biosynthesis; carbamoyl phosphate from bicarbonate: step 1/1. Its pathway is pyrimidine metabolism; UMP biosynthesis via de novo pathway; (S)-dihydroorotate from bicarbonate: step 1/3. In terms of biological role, small subunit of the glutamine-dependent carbamoyl phosphate synthetase (CPSase). CPSase catalyzes the formation of carbamoyl phosphate from the ammonia moiety of glutamine, carbonate, and phosphate donated by ATP, constituting the first step of 2 biosynthetic pathways, one leading to arginine and/or urea and the other to pyrimidine nucleotides. The small subunit (glutamine amidotransferase) binds and cleaves glutamine to supply the large subunit with the substrate ammonia. The sequence is that of Carbamoyl phosphate synthase small chain from Buchnera aphidicola subsp. Baizongia pistaciae (strain Bp).